The sequence spans 434 residues: RNA-binding protein SRO9 (434 aa).

The segment covering 1–13 (MSAETAAANTATA) has biased composition (low complexity). Positions 1 to 243 (MSAETAAANT…FHHNQQHPQQ (243 aa)) are disordered. Residues 26 to 41 (SKQVNLTPAPLPTSSP) are compositionally biased toward polar residues. The residue at position 55 (Ser55) is a Phosphoserine. A compositionally biased stretch (low complexity) spans 93–124 (KRSGSKNGASNGNSNKSKNNKTAASSTSSSNA). Over residues 125–140 (NRKKKHHQHNAKKQQQ) the composition is skewed to basic residues. Phosphoserine is present on Ser148. Lys156 participates in a covalent cross-link: Glycyl lysine isopeptide (Lys-Gly) (interchain with G-Cter in ubiquitin). The segment covering 158–167 (ATSQENGQST) has biased composition (polar residues). Over residues 173-195 (PHHRNHHHSHHHNSNGPQRRKFH) the composition is skewed to basic residues. Over residues 196–208 (NSNNAGMPQNQGF) the composition is skewed to polar residues. The segment covering 218 to 227 (RNARNNNNNR) has biased composition (low complexity). Basic residues predominate over residues 228–238 (SKYHNHFHHNQ). In terms of domain architecture, HTH La-type RNA-binding spans 255–351 (VQPVLMAINN…KEGDNVTGEA (97 aa)). Residues Lys301, Lys342, and Lys352 each participate in a glycyl lysine isopeptide (Lys-Gly) (interchain with G-Cter in ubiquitin) cross-link. A disordered region spans residues 396-434 (SLPPVPQQEEESSTELASQEQETKEDSAPVAAGESESSL). Ser422 bears the Phosphoserine mark.

In terms of assembly, interacts with HAP1. Component of the HMC including HAP1, SRO9 and YDJ1.

It is found in the cytoplasm. Functionally, may overlap in function with tropomyosin and may be involved in organization of actin filaments. Acts as a multicopy suppressor of RHO3 mutation. RNA-binding protein which may modulate mRNA translation. Involved in heme regulation of HAP1, as a component of the high-molecular-weight complex (HMC). The polypeptide is RNA-binding protein SRO9 (SRO9) (Saccharomyces cerevisiae (strain ATCC 204508 / S288c) (Baker's yeast)).